The following is a 552-amino-acid chain: Phosphoglucomutase (552 aa).

The Phosphoserine intermediate role is filled by S143. Mg(2+) is bound by residues S143, D295, D297, and D299.

Belongs to the phosphohexose mutase family. The cofactor is Mg(2+).

The enzyme catalyses alpha-D-glucose 1-phosphate = alpha-D-glucose 6-phosphate. It participates in glycolipid metabolism; diglucosyl-diacylglycerol biosynthesis. Functionally, catalyzes the interconversion between glucose-6-phosphate and alpha-glucose-1-phosphate. This is the first step in the biosynthesis of diglucosyl-diacylglycerol (Glc2-DAG), i.e. the predominant glycolipid found in the S.aureus membrane, which is also used as a membrane anchor for lipoteichoic acid (LTA). This is Phosphoglucomutase (pgcA) from Staphylococcus aureus (strain MRSA252).